A 341-amino-acid chain; its full sequence is L-threonine 3-dehydrogenase (341 aa).

Residue Cys-38 participates in Zn(2+) binding. Residues Thr-40 and His-43 each act as charge relay system in the active site. Zn(2+)-binding residues include His-63, Glu-64, Cys-93, Cys-96, Cys-99, and Cys-107. NAD(+) is bound by residues Ile-175, Asp-195, Arg-200, 262-264 (LGI), and 286-287 (IY).

Belongs to the zinc-containing alcohol dehydrogenase family. In terms of assembly, homotetramer. Zn(2+) serves as cofactor.

The protein resides in the cytoplasm. It catalyses the reaction L-threonine + NAD(+) = (2S)-2-amino-3-oxobutanoate + NADH + H(+). Its pathway is amino-acid degradation; L-threonine degradation via oxydo-reductase pathway; glycine from L-threonine: step 1/2. Its function is as follows. Catalyzes the NAD(+)-dependent oxidation of L-threonine to 2-amino-3-ketobutyrate. The polypeptide is L-threonine 3-dehydrogenase (Shewanella loihica (strain ATCC BAA-1088 / PV-4)).